The primary structure comprises 580 residues: MKMKIAIVTACPSGVANSIIAAGLLQQASKTLGWEAYIECHSTVIAGHTLSEEEINKADLVILAANGKIDMQRFVGKKVYQSPITACTSDPVGYLKQAAEQATELSSEQATRCDSPATASVSAKKIVAITACPTGVAHTFMAAEALEAEATRQGHQIKVETRGSVGAKNQLTEQEIAAADLVIIAADIDVPLDRFNGKKLYKTSTGLTLKKTAQELSNAFAQAKTFSSSANSATNEKAEEKKGVYKHLMTGVSHMLPVVVAGGLIIALSFVFGIEAFKEEGTLAAALMQIGGGSAFALMIPVLAGYIAFSIADRPGLAPGLIGGMLASSTGAGFLGGIVAGFLAGYSAKFIADKVQLPQSMAALKPILIIPFIASLFTGLVMIYVVGGPMSSIMSGMTSFLNNMGSTNAILLGIVLGAMMCFDLGGPVNKAAYTFGVGLLASQTYAPMAAIMAAGMVPALGMGLATFIAKDKFEAGEREAGKASFVLGLCFISEGAIPFAAKDPMRVIPACMVGGAVTGALSMLFGAKLMAPHGGLFVLLIPNAISPVLLYLVAIAVGTAITGFGYAMLKKSAQAKAVAA.

PTS EIIB type-2 domains follow at residues 3 to 100 and 124 to 221; these read MKIA…QAAE and KKIV…NAFA. Active-site phosphocysteine intermediate; for EIIB activity residues include C11 and C132. 2 positions are modified to phosphocysteine; by EIIA: C11 and C132. The 336-residue stretch at 244 to 579 folds into the PTS EIIC type-2 domain; the sequence is VYKHLMTGVS…KKSAQAKAVA (336 aa). The next 9 membrane-spanning stretches (helical) occupy residues 254–274, 292–312, 322–342, 367–387, 408–428, 448–468, 480–500, 507–527, and 537–557; these read HMLP…VFGI, GGSA…FSIA, IGGM…VAGF, ILII…YVVG, NAIL…GGPV, MAAI…ATFI, AGKA…IPFA, VIPA…LFGA, and FVLL…AIAV.

The protein localises to the cell inner membrane. It carries out the reaction D-fructose(out) + N(pros)-phospho-L-histidyl-[protein] = D-fructose 1-phosphate(in) + L-histidyl-[protein]. Functionally, the phosphoenolpyruvate-dependent sugar phosphotransferase system (sugar PTS), a major carbohydrate active transport system, catalyzes the phosphorylation of incoming sugar substrates concomitantly with their translocation across the cell membrane. The enzyme II FruAB PTS system is involved in fructose transport. This Vibrio cholerae serotype O1 (strain ATCC 39315 / El Tor Inaba N16961) protein is PTS system fructose-specific EIIB'BC component.